Consider the following 343-residue polypeptide: Probable dual-specificity RNA methyltransferase RlmN (343 aa).

Glu92 serves as the catalytic Proton acceptor. The Radical SAM core domain occupies 98–328 (YHHGLTACIS…TTVRREMGAD (231 aa)). Cys105 and Cys333 are oxidised to a cystine. [4Fe-4S] cluster contacts are provided by Cys112, Cys116, and Cys119. Residues 159-160 (GE), Ser191, 214-216 (SLH), and Asn290 each bind S-adenosyl-L-methionine. The active-site S-methylcysteine intermediate is the Cys333.

The protein belongs to the radical SAM superfamily. RlmN family. [4Fe-4S] cluster is required as a cofactor.

It is found in the cytoplasm. The enzyme catalyses adenosine(2503) in 23S rRNA + 2 reduced [2Fe-2S]-[ferredoxin] + 2 S-adenosyl-L-methionine = 2-methyladenosine(2503) in 23S rRNA + 5'-deoxyadenosine + L-methionine + 2 oxidized [2Fe-2S]-[ferredoxin] + S-adenosyl-L-homocysteine. It carries out the reaction adenosine(37) in tRNA + 2 reduced [2Fe-2S]-[ferredoxin] + 2 S-adenosyl-L-methionine = 2-methyladenosine(37) in tRNA + 5'-deoxyadenosine + L-methionine + 2 oxidized [2Fe-2S]-[ferredoxin] + S-adenosyl-L-homocysteine. Its function is as follows. Specifically methylates position 2 of adenine 2503 in 23S rRNA and position 2 of adenine 37 in tRNAs. The protein is Probable dual-specificity RNA methyltransferase RlmN of Alkaliphilus oremlandii (strain OhILAs) (Clostridium oremlandii (strain OhILAs)).